The following is a 445-amino-acid chain: tRNA-2-methylthio-N(6)-dimethylallyladenosine synthase (445 aa).

The 122-residue stretch at 3 to 124 folds into the MTTase N-terminal domain; the sequence is KKLYIKTYGC…LPELISKVVR (122 aa). 6 residues coordinate [4Fe-4S] cluster: Cys12, Cys48, Cys87, Cys162, Cys166, and Cys169. The region spanning 148 to 380 is the Radical SAM core domain; the sequence is YTQGASSFIS…QKELATQQLA (233 aa). The TRAM domain occupies 383-445; the sequence is ESCVGSTMKV…ALNSLTGEIL (63 aa).

Belongs to the methylthiotransferase family. MiaB subfamily. Monomer. It depends on [4Fe-4S] cluster as a cofactor.

Its subcellular location is the cytoplasm. The enzyme catalyses N(6)-dimethylallyladenosine(37) in tRNA + (sulfur carrier)-SH + AH2 + 2 S-adenosyl-L-methionine = 2-methylsulfanyl-N(6)-dimethylallyladenosine(37) in tRNA + (sulfur carrier)-H + 5'-deoxyadenosine + L-methionine + A + S-adenosyl-L-homocysteine + 2 H(+). In terms of biological role, catalyzes the methylthiolation of N6-(dimethylallyl)adenosine (i(6)A), leading to the formation of 2-methylthio-N6-(dimethylallyl)adenosine (ms(2)i(6)A) at position 37 in tRNAs that read codons beginning with uridine. In Rickettsia typhi (strain ATCC VR-144 / Wilmington), this protein is tRNA-2-methylthio-N(6)-dimethylallyladenosine synthase.